The following is a 448-amino-acid chain: 4-hydroxybenzoate transporter PcaK (448 aa).

The Cytoplasmic segment spans residues 1 to 30 (MNQAQNSVGKSLDVQSFINQQPLSRYQWRV). Residues 31–51 (VLLCFLIVFLDGLDTAAMGFI) form a helical membrane-spanning segment. Residues 52 to 67 (APALSQEWGIDRASLG) lie on the Periplasmic side of the membrane. Residues 68 to 88 (PVMSAALIGMVFGALGSGPLA) form a helical membrane-spanning segment. Topologically, residues 89-94 (DRFGRK) are cytoplasmic. The helical transmembrane segment at 95-115 (GVLVGAVLVFGGFSLASAYAT) threads the bilayer. At 116–119 (NVDQ) the chain is on the periplasmic side. Residues 120–140 (LLVLRFLTGLGLGAGMPNATT) traverse the membrane as a helical segment. Residues 141–152 (LLSEYTPERLKS) are Cytoplasmic-facing. The helical transmembrane segment at 153–173 (LLVTSMFCGFNLGMAGGGFIS) threads the bilayer. Topologically, residues 174–184 (AKMIPAYGWHS) are periplasmic. A helical membrane pass occupies residues 185 to 205 (LLVIGGVLPLLLALVLMVWLP). At 206–261 (ESARFLVVRNRGTDKIRKTLSPIAPQVVAEAGSFSVPEQKAVAARSVFAVIFSGTY) the chain is on the cytoplasmic side. Residues 262 to 282 (GLGTMLLWLTYFMGLVIVYLL) form a helical membrane-spanning segment. The Periplasmic segment spans residues 283 to 301 (TSWLPTLMRDSGASMEQAA). The helical transmembrane segment at 302 to 322 (FIGALFQFGGVLSAVGVGWAM) threads the bilayer. The Cytoplasmic portion of the chain corresponds to 323–329 (DRYNPHK). The helical transmembrane segment at 330 to 350 (VIGIFYLLAGVFAYAVGQSLG) threads the bilayer. Residue Asn351 is a topological domain, periplasmic. A helical transmembrane segment spans residues 352–372 (ITVLATLVLIAGMCVNGAQSA). The Cytoplasmic segment spans residues 373–398 (MPSLAARFYPTQGRATGVSWMLGIGR). The helical transmembrane segment at 399–419 (FGAILGAWSGATLLGLGWNFE) threads the bilayer. The Periplasmic segment spans residues 420 to 421 (QV). A helical membrane pass occupies residues 422–442 (LTALLVPAALATVGVIVKGLV). Residues 443–448 (SHADAT) lie on the Cytoplasmic side of the membrane.

This sequence belongs to the major facilitator superfamily. Aromatic acid:H(+) symporter (AAHS) (TC 2.A.1.15) family.

It is found in the cell inner membrane. Its function is as follows. Transports 4-hydroxybenzoate (4-HBA) and protocatechuate across the membrane. Driven by the proton motive force. Also functions as a chemoreceptor, which is required for chemotaxis to aromatic acids. The protein is 4-hydroxybenzoate transporter PcaK (pcaK) of Pseudomonas putida (Arthrobacter siderocapsulatus).